Here is a 384-residue protein sequence, read N- to C-terminus: Outer membrane protein assembly factor BamB (384 aa).

Residues 1 to 16 (MKIRILVLILCALTQG) form the signal peptide. Cys17 carries the N-palmitoyl cysteine lipid modification. Cys17 carries the S-diacylglycerol cysteine lipid modification.

Belongs to the BamB family. Part of the Bam complex.

The protein resides in the cell outer membrane. In terms of biological role, part of the outer membrane protein assembly complex, which is involved in assembly and insertion of beta-barrel proteins into the outer membrane. The protein is Outer membrane protein assembly factor BamB of Legionella pneumophila (strain Paris).